Here is a 152-residue protein sequence, read N- to C-terminus: Protein PLANT CADMIUM RESISTANCE 2 (152 aa).

A helical transmembrane segment spans residues 57–79 (TAGALYALIAVVTGCACIYSCFY).

It belongs to the cornifelin family. Homooligomer. Expressed in roots, leaves, shoots, stems, flowers and siliques. In leaves, restricted mainly to the vascular tissue. Expressed in all cells in the root tip, in the vascular tissue and the epidermis in the elongation zone, and only in the epidermal cells in the root hair zone.

The protein resides in the cell membrane. Zinc transporter acting in both zinc extrusion and long-distance zinc transport. Involved in the loading of zinc into the xyleme and in the detoxification of excess zinc at the epidermal cells. Acts independently from the zinc transporters HMA2 and HMA4. May be also involved in cadmium resistance. This is Protein PLANT CADMIUM RESISTANCE 2 (PCR2) from Arabidopsis thaliana (Mouse-ear cress).